Reading from the N-terminus, the 269-residue chain is MINKTLLQKRFNGAAVSYDRYANVQKKMAHSLLSILKERYSETASIRILELGCGTGYVTEQLSKLFPKSHITAVDFAESMIAIAQTRQNVKNVTFHCEDIERLRLEESYDVIISNATFQWLNNLQQVLRNLFQHLSIDGILLFSTFGHETFQELHASFQRAKEERNIKNETSIGQRFYSKDQLLHICKIETGDVHVSETCYIESFTEVKEFLHSIRKVGATNSNEGSYCQSPSLFRAMLRIYERDFTGNEGIMATYHALFIHITKEGKR.

Belongs to the methyltransferase superfamily.

The catalysed reaction is malonyl-[ACP] + S-adenosyl-L-methionine = malonyl-[ACP] methyl ester + S-adenosyl-L-homocysteine. It participates in cofactor biosynthesis; biotin biosynthesis. Its function is as follows. Converts the free carboxyl group of a malonyl-thioester to its methyl ester by transfer of a methyl group from S-adenosyl-L-methionine (SAM). It allows to synthesize pimeloyl-ACP via the fatty acid synthetic pathway. The protein is Malonyl-[acyl-carrier protein] O-methyltransferase of Bacillus cereus (strain ATCC 14579 / DSM 31 / CCUG 7414 / JCM 2152 / NBRC 15305 / NCIMB 9373 / NCTC 2599 / NRRL B-3711).